A 1407-amino-acid chain; its full sequence is DNA-directed RNA polymerase subunit beta' (1407 aa).

Positions 70, 72, 85, and 88 each coordinate Zn(2+). Residues D460, D462, and D464 each contribute to the Mg(2+) site. Residues C814, C888, C895, and C898 each contribute to the Zn(2+) site. K972 is subject to N6-acetyllysine.

The protein belongs to the RNA polymerase beta' chain family. As to quaternary structure, the RNAP catalytic core consists of 2 alpha, 1 beta, 1 beta' and 1 omega subunit. When a sigma factor is associated with the core the holoenzyme is formed, which can initiate transcription. Mg(2+) is required as a cofactor. Requires Zn(2+) as cofactor.

It catalyses the reaction RNA(n) + a ribonucleoside 5'-triphosphate = RNA(n+1) + diphosphate. DNA-dependent RNA polymerase catalyzes the transcription of DNA into RNA using the four ribonucleoside triphosphates as substrates. In Escherichia coli O6:H1 (strain CFT073 / ATCC 700928 / UPEC), this protein is DNA-directed RNA polymerase subunit beta'.